We begin with the raw amino-acid sequence, 332 residues long: D-galactose/methyl-galactoside binding periplasmic protein MglB (332 aa).

The first 23 residues, 1 to 23, serve as a signal peptide directing secretion; that stretch reads MNKKVLTLSAVMASMLFGAAAHA. Beta-D-galactose is bound by residues aspartate 37 and asparagine 114. Beta-D-glucose contacts are provided by aspartate 37 and asparagine 114. The Ca(2+) site is built by aspartate 157, asparagine 159, aspartate 161, glutamine 163, and glutamine 165. 3 residues coordinate beta-D-galactose: histidine 175, aspartate 177, and arginine 181. The beta-D-glucose site is built by histidine 175, aspartate 177, and arginine 181. Glutamate 228 is a binding site for Ca(2+). Beta-D-galactose is bound by residues asparagine 234, aspartate 259, and asparagine 279. Beta-D-glucose contacts are provided by asparagine 234, aspartate 259, and asparagine 279.

It belongs to the bacterial solute-binding protein 2 family. In terms of assembly, the ABC transporter complex is composed of one ATP-binding protein (MglA), two transmembrane proteins (MglC) and a solute-binding protein (MglB).

Its subcellular location is the periplasm. Its function is as follows. Part of the ABC transporter complex MglABC involved in galactose/methyl galactoside import. In addition, binds D-galactose and D-glucose and plays a role in the chemotaxis towards these two sugars by interacting with the Trg chemoreceptor. The protein is D-galactose/methyl-galactoside binding periplasmic protein MglB (mglB) of Escherichia coli O6:H1 (strain CFT073 / ATCC 700928 / UPEC).